The sequence spans 425 residues: Xylose isomerase (425 aa).

Residues histidine 101 and aspartate 104 contribute to the active site. Residues glutamate 232, glutamate 268, histidine 271, aspartate 296, aspartate 307, aspartate 309, and aspartate 339 each coordinate Mg(2+).

The protein belongs to the xylose isomerase family. In terms of assembly, homotetramer. Mg(2+) serves as cofactor.

The protein resides in the cytoplasm. The catalysed reaction is alpha-D-xylose = alpha-D-xylulofuranose. The sequence is that of Xylose isomerase from Salmonella paratyphi A (strain ATCC 9150 / SARB42).